Here is a 346-residue protein sequence, read N- to C-terminus: Hydroxymethylglutaryl-CoA synthase (346 aa).

Asp-28 contributes to the (3S)-3-hydroxy-3-methylglutaryl-CoA binding site. The active-site Proton donor/acceptor is the Glu-80. The (3S)-3-hydroxy-3-methylglutaryl-CoA site is built by Cys-112 and Thr-153. The active-site Acyl-thioester intermediate is the Cys-112. Arg-199 is a CoA binding site. Residues Thr-201 and His-234 each coordinate (3S)-3-hydroxy-3-methylglutaryl-CoA. His-234 (proton donor/acceptor) is an active-site residue. Lys-239 contributes to the CoA binding site. Positions 243, 266, and 296 each coordinate (3S)-3-hydroxy-3-methylglutaryl-CoA.

It belongs to the thiolase-like superfamily. Archaeal HMG-CoA synthase family. Interacts with acetoacetyl-CoA thiolase that catalyzes the precedent step in the pathway and with a DUF35 protein. The acetoacetyl-CoA thiolase/HMG-CoA synthase complex channels the intermediate via a fused CoA-binding site, which allows for efficient coupling of the endergonic thiolase reaction with the exergonic HMGCS reaction.

It carries out the reaction acetoacetyl-CoA + acetyl-CoA + H2O = (3S)-3-hydroxy-3-methylglutaryl-CoA + CoA + H(+). It functions in the pathway metabolic intermediate biosynthesis; (R)-mevalonate biosynthesis; (R)-mevalonate from acetyl-CoA: step 2/3. Its function is as follows. Catalyzes the condensation of acetyl-CoA with acetoacetyl-CoA to form 3-hydroxy-3-methylglutaryl-CoA (HMG-CoA). Functions in the mevalonate (MVA) pathway leading to isopentenyl diphosphate (IPP), a key precursor for the biosynthesis of isoprenoid compounds that are building blocks of archaeal membrane lipids. This Methanothermobacter thermautotrophicus (strain ATCC 29096 / DSM 1053 / JCM 10044 / NBRC 100330 / Delta H) (Methanobacterium thermoautotrophicum) protein is Hydroxymethylglutaryl-CoA synthase.